The sequence spans 306 residues: Ribosomal protein L11 methyltransferase (306 aa).

Thr154, Gly179, Asp201, and Asn242 together coordinate S-adenosyl-L-methionine.

The protein belongs to the methyltransferase superfamily. PrmA family.

Its subcellular location is the cytoplasm. It carries out the reaction L-lysyl-[protein] + 3 S-adenosyl-L-methionine = N(6),N(6),N(6)-trimethyl-L-lysyl-[protein] + 3 S-adenosyl-L-homocysteine + 3 H(+). In terms of biological role, methylates ribosomal protein L11. The chain is Ribosomal protein L11 methyltransferase from Xylella fastidiosa (strain Temecula1 / ATCC 700964).